The primary structure comprises 705 residues: Polyribonucleotide nucleotidyltransferase (705 aa).

Residues D487 and D493 each coordinate Mg(2+). In terms of domain architecture, KH spans 554 to 613 (PKILTMAIEPDKIRDVIGPSGKQINQIIDETGVKIDIEQDGSIFISSTDNEMNKKAKQII). The S1 motif domain occupies 623 to 691 (GQIYLGKVKR…RQGRVNLSRK (69 aa)).

It belongs to the polyribonucleotide nucleotidyltransferase family. Mg(2+) is required as a cofactor.

The protein localises to the cytoplasm. It catalyses the reaction RNA(n+1) + phosphate = RNA(n) + a ribonucleoside 5'-diphosphate. In terms of biological role, involved in mRNA degradation. Catalyzes the phosphorolysis of single-stranded polyribonucleotides processively in the 3'- to 5'-direction. This chain is Polyribonucleotide nucleotidyltransferase, found in Oceanobacillus iheyensis (strain DSM 14371 / CIP 107618 / JCM 11309 / KCTC 3954 / HTE831).